The sequence spans 270 residues: Bacterial microcompartment shell protein PduB (270 aa).

BMC circularly permuted domains lie at 47–152 (EFVG…DRTF) and 154–262 (DVYA…GSEP).

The protein belongs to the EutL/PduB family. As to quaternary structure, homotrimerizes to form a pseudohexamer with a central pore. The trimers pack into an array. Both forms interact with shell protein PduA. In terms of processing, in purified BMCs seen as a 30.0 kDa and 25.0 kDa form; the smaller form is called PduB'.

The protein localises to the bacterial microcompartment. Its pathway is polyol metabolism; 1,2-propanediol degradation. Its function is as follows. The two proteins produced are among the major shell proteins of the bacterial microcompartment (BMC) shell dedicated to 1,2-propanediol (1,2-PD) degradation. Overexpression of the gene gives large amorphous intracellular structures; when only PduB is overexpressed large circular bodies are observed which contain concentric rings, whereas with PduB' overexpression internal bodies with regular straight-lined structures were generated. The N-terminus of the long form (PduB) is required for correct formation of BMCs. May play a major role in binding the enzyme contents to the shell. Functionally, expression of a cosmid containing the full 21-gene pdu operon in E.coli allows E.coli to grow on 1,2-propanediol (1,2-PD) with the appearance of BMCs in its cytoplasm. In terms of biological role, the 1,2-PD-specific bacterial microcompartment (BMC) concentrates low levels of 1,2-PD catabolic enzymes, concentrates volatile reaction intermediates thus enhancing pathway flux and keeps the level of toxic, mutagenic propionaldehyde low. The protein is Bacterial microcompartment shell protein PduB of Citrobacter freundii.